A 465-amino-acid polypeptide reads, in one-letter code: UDP-N-acetylmuramate--L-alanine ligase (465 aa).

ATP is bound at residue 112-118 (GTHGKTT).

This sequence belongs to the MurCDEF family.

It localises to the cytoplasm. It carries out the reaction UDP-N-acetyl-alpha-D-muramate + L-alanine + ATP = UDP-N-acetyl-alpha-D-muramoyl-L-alanine + ADP + phosphate + H(+). Its pathway is cell wall biogenesis; peptidoglycan biosynthesis. Cell wall formation. This is UDP-N-acetylmuramate--L-alanine ligase from Burkholderia mallei (strain NCTC 10247).